The sequence spans 320 residues: Baseplate tail-tube junction protein gp54 (320 aa).

In terms of assembly, homohexamer. The tube second annulus is composed of a gp54 hexameric ring. Interacts with the tail tube protein gp19. Interacts with the first layer of sheath proteins gp18. Part of the baseplate macromolecular complex which consists of gp5, gp5.4, gp27 (central spike complex); gp6, gp25, gp53 (inner baseplate); gp7, gp8 (intermediate baseplate); gp9, gp10, gp11, gp12 (peripheral); gp48 and gp54 (proximal region of the tail tube).

The protein localises to the virion. Its function is as follows. Baseplate protein that forms, together with gp48, the baseplate-tail tube junction. The tail tube first 2 annuli are formed by gp48 and gp54, which are in continuation of the spike complex. Involved in the tail assembly. Morphogenesis of the baseplate is completed by association of gp48 and gp54, which bind the upper part of the baseplate dome to form the platform for polymerization of the tail tube. This chain is Baseplate tail-tube junction protein gp54 (54), found in Escherichia coli (Bacteriophage T4).